The primary structure comprises 348 residues: 4-hydroxy-2-oxovalerate aldolase 3 (348 aa).

The region spanning 8–260 is the Pyruvate carboxyltransferase domain; it reads ITVHDMTLRD…ETGVDVWKIQ (253 aa). A substrate-binding site is contributed by 16 to 17; that stretch reads RD. Aspartate 17 serves as a coordination point for Mn(2+). Histidine 20 serves as the catalytic Proton acceptor. Residues serine 170 and histidine 199 each coordinate substrate. Positions 199 and 201 each coordinate Mn(2+). Position 290 (tyrosine 290) interacts with substrate.

It belongs to the 4-hydroxy-2-oxovalerate aldolase family.

The catalysed reaction is (S)-4-hydroxy-2-oxopentanoate = acetaldehyde + pyruvate. This is 4-hydroxy-2-oxovalerate aldolase 3 from Burkholderia lata (strain ATCC 17760 / DSM 23089 / LMG 22485 / NCIMB 9086 / R18194 / 383).